We begin with the raw amino-acid sequence, 294 residues long: Acetyl-coenzyme A carboxylase carboxyl transferase subunit beta (294 aa).

Positions I30–E294 constitute a CoA carboxyltransferase N-terminal domain. Positions 34, 37, 53, and 56 each coordinate Zn(2+). A C4-type zinc finger spans residues C34–C56.

Belongs to the AccD/PCCB family. Acetyl-CoA carboxylase is a heterohexamer composed of biotin carboxyl carrier protein (AccB), biotin carboxylase (AccC) and two subunits each of ACCase subunit alpha (AccA) and ACCase subunit beta (AccD). Zn(2+) serves as cofactor.

The protein localises to the cytoplasm. The enzyme catalyses N(6)-carboxybiotinyl-L-lysyl-[protein] + acetyl-CoA = N(6)-biotinyl-L-lysyl-[protein] + malonyl-CoA. It functions in the pathway lipid metabolism; malonyl-CoA biosynthesis; malonyl-CoA from acetyl-CoA: step 1/1. Its function is as follows. Component of the acetyl coenzyme A carboxylase (ACC) complex. Biotin carboxylase (BC) catalyzes the carboxylation of biotin on its carrier protein (BCCP) and then the CO(2) group is transferred by the transcarboxylase to acetyl-CoA to form malonyl-CoA. The polypeptide is Acetyl-coenzyme A carboxylase carboxyl transferase subunit beta (Listeria monocytogenes serotype 4a (strain HCC23)).